The following is a 179-amino-acid chain: Large ribosomal subunit protein uL6 (179 aa).

The protein belongs to the universal ribosomal protein uL6 family. In terms of assembly, part of the 50S ribosomal subunit.

Functionally, this protein binds to the 23S rRNA, and is important in its secondary structure. It is located near the subunit interface in the base of the L7/L12 stalk, and near the tRNA binding site of the peptidyltransferase center. This Mycobacterium tuberculosis (strain ATCC 25618 / H37Rv) protein is Large ribosomal subunit protein uL6.